Consider the following 541-residue polypeptide: Chaperonin GroEL (541 aa).

Residues 29–32 (TLGP), 86–90 (DGTTT), Gly-413, 476–478 (NAA), and Asp-492 each bind ATP.

This sequence belongs to the chaperonin (HSP60) family. Forms a cylinder of 14 subunits composed of two heptameric rings stacked back-to-back. Interacts with the co-chaperonin GroES.

The protein resides in the cytoplasm. The enzyme catalyses ATP + H2O + a folded polypeptide = ADP + phosphate + an unfolded polypeptide.. Functionally, together with its co-chaperonin GroES, plays an essential role in assisting protein folding. The GroEL-GroES system forms a nano-cage that allows encapsulation of the non-native substrate proteins and provides a physical environment optimized to promote and accelerate protein folding. This is Chaperonin GroEL from Enterococcus faecalis (strain ATCC 700802 / V583).